Reading from the N-terminus, the 72-residue chain is UPF0352 protein Shal_2512 (72 aa).

It belongs to the UPF0352 family.

This Shewanella halifaxensis (strain HAW-EB4) protein is UPF0352 protein Shal_2512.